Here is a 125-residue protein sequence, read N- to C-terminus: MPTISQLVRKPRKAKRTKSKVPALESCPQKRGVCTRVYTTTPKKPNSALRKVARVRLTNGYEVSSYIGGEGHNLQEHSVVLIRGGRVKDLPGVRYHTVRGSLDTAGVKDRKQARSKYGSKRPKSA.

The interval 1-24 is disordered; that stretch reads MPTISQLVRKPRKAKRTKSKVPAL. Over residues 9 to 19 the composition is skewed to basic residues; sequence RKPRKAKRTKS. At D89 the chain carries 3-methylthioaspartic acid. The interval 101 to 125 is disordered; the sequence is SLDTAGVKDRKQARSKYGSKRPKSA. Basic residues predominate over residues 113 to 125; it reads ARSKYGSKRPKSA.

Belongs to the universal ribosomal protein uS12 family. In terms of assembly, part of the 30S ribosomal subunit. Contacts proteins S8 and S17. May interact with IF1 in the 30S initiation complex.

In terms of biological role, with S4 and S5 plays an important role in translational accuracy. Its function is as follows. Interacts with and stabilizes bases of the 16S rRNA that are involved in tRNA selection in the A site and with the mRNA backbone. Located at the interface of the 30S and 50S subunits, it traverses the body of the 30S subunit contacting proteins on the other side and probably holding the rRNA structure together. The combined cluster of proteins S8, S12 and S17 appears to hold together the shoulder and platform of the 30S subunit. The chain is Small ribosomal subunit protein uS12 from Nitrosomonas europaea (strain ATCC 19718 / CIP 103999 / KCTC 2705 / NBRC 14298).